A 314-amino-acid chain; its full sequence is Solute carrier family 25 member 44 (314 aa).

Solcar repeat units lie at residues 18–100 (KKFY…TRKF), 107–210 (SNTV…YAEQ), and 220–302 (PHIV…LKKL). Helical transmembrane passes span 20-42 (FYVFGVAMTMMIRVSVYPFTLIR), 71-90 (TGLYRGFLVNTFTLISGQCY), 113-133 (LVAGGSASLVAQSITVPIDVV), 185-201 (GYVASLLTYIPNSAVWW), 222-239 (IVFQAVSGPLAAATASIL), and 278-296 (LSARIISATPSTIVIVVGY).

Belongs to the mitochondrial carrier (TC 2.A.29) family.

It localises to the mitochondrion membrane. The catalysed reaction is L-valine(in) = L-valine(out). It carries out the reaction L-leucine(in) = L-leucine(out). Mitochondrial solute transporter which transports branched-chain amino acid (BCAA; valine, leucine and isoleucine) into mitochondria in brown adipose tissue (BAT). BAT is involved in BCAA catabolism and actively utilizes BCAA in the mitochondria for thermogenesis. The polypeptide is Solute carrier family 25 member 44 (Homo sapiens (Human)).